An 88-amino-acid chain; its full sequence is Small ribosomal subunit protein bS20 (88 aa).

Disordered stretches follow at residues 1–22 and 69–88; these read MPNI…AQNA and KNAA…GLSA.

It belongs to the bacterial ribosomal protein bS20 family.

Its function is as follows. Binds directly to 16S ribosomal RNA. This chain is Small ribosomal subunit protein bS20, found in Shouchella clausii (strain KSM-K16) (Alkalihalobacillus clausii).